The chain runs to 208 residues: Large ribosomal subunit protein uL4 (208 aa).

Residues 51 to 79 are disordered; the sequence is AKERAEVSFSTKKLKKQKGTGGARAGSRK.

This sequence belongs to the universal ribosomal protein uL4 family. Part of the 50S ribosomal subunit.

One of the primary rRNA binding proteins, this protein initially binds near the 5'-end of the 23S rRNA. It is important during the early stages of 50S assembly. It makes multiple contacts with different domains of the 23S rRNA in the assembled 50S subunit and ribosome. Functionally, forms part of the polypeptide exit tunnel. The chain is Large ribosomal subunit protein uL4 from Cytophaga hutchinsonii (strain ATCC 33406 / DSM 1761 / CIP 103989 / NBRC 15051 / NCIMB 9469 / D465).